Here is a 457-residue protein sequence, read N- to C-terminus: Adenylosuccinate synthetase isozyme 1 (457 aa).

Positions 1-21 are disordered; sequence MSGTRASNDRPPGAGGVKRGR. Residues 42-48 and 70-72 each bind GTP; these read GDEGKGK and GHT. Asp43 (proton acceptor) is an active-site residue. The Mg(2+) site is built by Asp43 and Gly70. Asp43 lines the substrate pocket. IMP contacts are provided by residues 43 to 46, 68 to 71, Thr163, Arg177, Asn256, Thr271, and Arg335; these read DEGK and NAGH. The Proton donor role is filled by His71. 331–337 contributes to the substrate binding site; sequence VTTGRKR. Residues Arg337, 363–365, and 445–448 contribute to the GTP site; these read KLD and GVGK.

The protein belongs to the adenylosuccinate synthetase family. In terms of assembly, homodimer. Mg(2+) is required as a cofactor. Predominantly expressed in skeletal muscle and heart, as well as in several hematopoietic cell lines and solid tumors.

Its subcellular location is the cytoplasm. It carries out the reaction IMP + L-aspartate + GTP = N(6)-(1,2-dicarboxyethyl)-AMP + GDP + phosphate + 2 H(+). It functions in the pathway purine metabolism; AMP biosynthesis via de novo pathway; AMP from IMP: step 1/2. In terms of biological role, component of the purine nucleotide cycle (PNC), which interconverts IMP and AMP to regulate the nucleotide levels in various tissues, and which contributes to glycolysis and ammoniagenesis. Catalyzes the first committed step in the biosynthesis of AMP from IMP. This is Adenylosuccinate synthetase isozyme 1 from Homo sapiens (Human).